The following is an 820-amino-acid chain: MAPPKKRTAPKDDDFVLTLSDDENDVFSGINEDGDDHLDEETAKSTTKKRKRDTAETTQSKNKKQKQQKQSKNGKQQKKVEEAASEPEEGSEEEEDAGEDDGALNSDFEFDVGAAAQKDVVEGFDGWGLDETKDGAKKNGDKQGVDIDEIISRRQAKKEAQLKKKPKKQEVESEDEGSGNEDDASDGGMSVDFQDDELMAEDGFGMGADGEDESGQSDAQESGSEDEHAGSDSEDSDDDDDDAASDNDSVATPVQHPDDVASDNDGSDIESEVDAEEEAKRKAFFAPEEQTSEQSAAELSKKSFQEFNLSRPILRGLAAVNFTNPTPIQRKTIPVALLGKDIVGSAVTGSGKTAAFVVPILERLLFRPRKVPTSRVAILMPTRELAVQCYNVATKLATYTDITFCQLVGGFSLREQENILKKRPDVIIATPGRFIDHMRNSASFTVDTLEILVLDEADRMLEDGFADELNEILTTIPKSRQTMLFSATMTDSVDKLIRVGLNRPVRLMVDSKKNTSMNLIQEFVRLRPGREDKRLGYLLHLCKEVYTGRVIVFFRQKKEAHRVRIAFGLLGLKAAELHGSMSQEQRIRSVENFREGKVSFLLATDLAARGLDIKGVETVINYEAPQSHEIYLHRVGRTARAGRSGRACTIAAEPDRKVVKAAVKASKAQGAKVASRVVDPAVADRWAQKAKDLEEEINAVLEEEKIEKQLAQAEMQVTRSENMIKHEAEIMSRPKRTWFASEREKILSKKAGAAELNGLDSVKSKKEKVRLSNKDKKRLDDSRQRNEGNIGWKKGKVDRESQKQGKIQKGKKENKKKGKK.

Positions 1–278 (MAPPKKRTAP…IESEVDAEEE (278 aa)) are disordered. The span at 83–102 (AASEPEEGSEEEEDAGEDDG) shows a compositional bias: acidic residues. Residues 130-145 (DETKDGAKKNGDKQGV) show a composition bias toward basic and acidic residues. Acidic residues-rich tracts occupy residues 172 to 185 (ESEDEGSGNEDDAS), 232 to 245 (DSEDSDDDDDDAAS), and 260 to 277 (VASDNDGSDIESEVDAEE). The short motif at 302–330 (KSFQEFNLSRPILRGLAAVNFTNPTPIQR) is the Q motif element. The region spanning 333–507 (IPVALLGKDI…RVGLNRPVRL (175 aa)) is the Helicase ATP-binding domain. 346-353 (AVTGSGKT) serves as a coordination point for ATP. The short motif at 455–458 (DEAD) is the DEAD box element. Residues 537–714 (YLLHLCKEVY…KIEKQLAQAE (178 aa)) form the Helicase C-terminal domain. A coiled-coil region spans residues 681–729 (AVADRWAQKAKDLEEEINAVLEEEKIEKQLAQAEMQVTRSENMIKHEAE). Residues 759–820 (LDSVKSKKEK…KKENKKKGKK (62 aa)) form a disordered region. Over residues 769 to 786 (VRLSNKDKKRLDDSRQRN) the composition is skewed to basic and acidic residues. The span at 806–820 (KIQKGKKENKKKGKK) shows a compositional bias: basic residues.

This sequence belongs to the DEAD box helicase family. DDX27/DRS1 subfamily. In terms of assembly, associates with pre-ribosomal particles.

The protein resides in the nucleus. Its subcellular location is the nucleolus. It catalyses the reaction ATP + H2O = ADP + phosphate + H(+). Its function is as follows. ATP-binding RNA helicase involved in ribosome assembly. This is ATP-dependent RNA helicase drs1 (drs1) from Aspergillus oryzae (strain ATCC 42149 / RIB 40) (Yellow koji mold).